Here is a 135-residue protein sequence, read N- to C-terminus: Integration host factor subunit beta (135 aa).

The segment covering 83 to 92 (GKELRERVDR) has biased composition (basic and acidic residues). The interval 83–135 (GKELRERVDRTVTQGGGMNGNGHAPHGKTGQSQLGSQSPASLHDDGQLNLVRS) is disordered. Over residues 111–122 (TGQSQLGSQSPA) the composition is skewed to polar residues.

The protein belongs to the bacterial histone-like protein family. In terms of assembly, heterodimer of an alpha and a beta chain.

In terms of biological role, this protein is one of the two subunits of integration host factor, a specific DNA-binding protein that functions in genetic recombination as well as in transcriptional and translational control. This is Integration host factor subunit beta from Cupriavidus metallidurans (strain ATCC 43123 / DSM 2839 / NBRC 102507 / CH34) (Ralstonia metallidurans).